We begin with the raw amino-acid sequence, 1071 residues long: MKLIYTEMSYSMTEILVNEARKAADQGYRVFYIAPNSLSFEKEREVLTLLPERGTFSIIVTRFVQMSRYFTVESSPSKQHLDDTTLAMIFYRALMQLKPEDLPSYGRLQNNSVFIEQLVELYKELKNAQLSVHDLTGLDHPQKQEDLIKIIELAETIMIQQDYNQDSPLQSFARAIKLGLLNNQLSKTVIVIDGFSRFSAEEDYLLSLLNNNCQEVIIGSYVSQKAYQKSFIKGNIYEASLHFLQDLAQKYHIKPVFATSNQVFKPAFSRLTQLFEATHDFSQVDWQLQKNDLDHFSLWQCHHQKEEIEHVAKSIRQKLYEGYRYKDILVLLGDMDAYQLQIGPIFDKFEIPYYLGKAEPMAAHPLVQFIESLERSQRYNWRREDILNMLKSGLFGCFDDSDIDRFEEYTQFADIKGFTKFSKPFTINSSRQYPLDFLNEMRQDIVLPLQELFKSQKQLGASLIDKLILFLEKIRLAENMQGLAQSQLEVEKNEEVWKRFTDILTSFHHIFGQEKLRLSDCLALIKTGMKSAQYRVVPATLDVVTIKSYDLVQPHSKPFVYAIGLTQSHFPKQIHHSGLLSDQERARINEIRNYRHFDIASAENSKKNHQTALSLFNAATKELVLSVPTVINETFDDLSPYLKELINFGLPLLDKGKNYLSYDNSDIGNYKALLSQIIAINRQDLIEMSDQDKMFWTVVLRYLRKQLRKQQLELPTSDYRLSTKPLSKEVIEVCFPKGIPLKLSATALTVFYNNQYNYFLKYVLNLNKTESIHPDSRIHGQYLHRVFERLMKDHTQEPFDNKLKQAIYHTNQESFFQQVYQDNAEAEYSLAILEDIVRSTAPILQLNQNIKVIDQEKNFHLDMGNEILVHGIIDRIDQLSDGSLGIVDYKSSANQFDIGTFYNGLSPQLVTYLAALKQIAPHDINQLFGAMYLHLQDPKLDLVTFKQIDNTLVESIYKALTYKGIFSEVEKEHLSTGAYQTKNALYSNDELETLLNYNKYLYLKAAKHIKKGHFLINPYTSDGKTVQGDQLKAITRFEADLDMAQARRLVTLPAKEKKECFLTLMRKESRL.

Belongs to the helicase family. AddB/RexB type 2 subfamily. As to quaternary structure, heterodimer of AddA and RexB. Mg(2+) serves as cofactor.

The heterodimer acts as both an ATP-dependent DNA helicase and an ATP-dependent, dual-direction single-stranded exonuclease. Recognizes the chi site generating a DNA molecule suitable for the initiation of homologous recombination. This subunit has 5' -&gt; 3' nuclease activity but not helicase activity. The polypeptide is ATP-dependent helicase/deoxyribonuclease subunit B (Streptococcus pyogenes serotype M12 (strain MGAS9429)).